A 301-amino-acid chain; its full sequence is D-alanine--D-alanine ligase (301 aa).

Residues 99 to 294 (KCILKAANIR…FPELIDMIID (196 aa)) enclose the ATP-grasp domain. Residue 126-181 (IEKMGYPVVVKPTHGGSSVATFIIKEEKDIKDAVIEGFKWDSEVIIEKFIKGDEIT) coordinates ATP. Mg(2+) contacts are provided by Asp-248, Glu-261, and Asn-263.

Belongs to the D-alanine--D-alanine ligase family. Mg(2+) is required as a cofactor. Requires Mn(2+) as cofactor.

Its subcellular location is the cytoplasm. It catalyses the reaction 2 D-alanine + ATP = D-alanyl-D-alanine + ADP + phosphate + H(+). Its pathway is cell wall biogenesis; peptidoglycan biosynthesis. Cell wall formation. This Clostridium botulinum (strain Alaska E43 / Type E3) protein is D-alanine--D-alanine ligase.